The chain runs to 2280 residues: Protein Ycf2 (2280 aa).

1631-1638 (GSIGTGRS) contributes to the ATP binding site.

It belongs to the Ycf2 family.

The protein localises to the plastid. It localises to the chloroplast stroma. In terms of biological role, probable ATPase of unknown function. Its presence in a non-photosynthetic plant (Epifagus virginiana) and experiments in tobacco indicate that it has an essential function which is probably not related to photosynthesis. The protein is Protein Ycf2 of Nicotiana tomentosiformis (Tobacco).